A 136-amino-acid polypeptide reads, in one-letter code: UPF0225 protein Mpe_A2093 (136 aa).

This sequence belongs to the UPF0225 family.

The polypeptide is UPF0225 protein Mpe_A2093 (Methylibium petroleiphilum (strain ATCC BAA-1232 / LMG 22953 / PM1)).